Reading from the N-terminus, the 102-residue chain is Small ribosomal subunit protein uS10 (102 aa).

The protein belongs to the universal ribosomal protein uS10 family. In terms of assembly, part of the 30S ribosomal subunit.

Functionally, involved in the binding of tRNA to the ribosomes. The polypeptide is Small ribosomal subunit protein uS10 (Tropheryma whipplei (strain TW08/27) (Whipple's bacillus)).